We begin with the raw amino-acid sequence, 89 residues long: MEVDKSLIAFLEMLDTAMAQRMLADLANDEKRTPQLYNAINKLLDRHKFQIGKLQPDVHILGGLAGALEEYKEKVGDNGLTDDDIYTLQ.

As to quaternary structure, gp18 and gp19 associate with DNA and prohead.

During the growth of this phage, DNA is synthesized as concatemers. During DNA packaging mature monomers are cut from the concatemers. The protein is DNA maturase A (18) of Enterobacteria phage T3 (Bacteriophage T3).